A 275-amino-acid chain; its full sequence is 3',5'-cyclic adenosine monophosphate phosphodiesterase CpdA (275 aa).

Positions 22, 24, 64, 94, 164, 203, and 205 each coordinate Fe cation. Residues His24, Asp64, and 94–95 (NH) each bind AMP. AMP is bound at residue His205.

The protein belongs to the cyclic nucleotide phosphodiesterase class-III family. Fe(2+) serves as cofactor.

It carries out the reaction 3',5'-cyclic AMP + H2O = AMP + H(+). In terms of biological role, hydrolyzes cAMP to 5'-AMP. Plays an important regulatory role in modulating the intracellular concentration of cAMP, thereby influencing cAMP-dependent processes. The polypeptide is 3',5'-cyclic adenosine monophosphate phosphodiesterase CpdA (Escherichia coli O157:H7).